A 282-amino-acid polypeptide reads, in one-letter code: Putative sugar uptake protein lp_2594 (282 aa).

Helical transmembrane passes span 2–21, 31–48, 53–75, 90–112, 119–136, 146–163, 176–194, 209–226, 233–252, and 262–281; these read IFLI…LLVG, MFGM…FWLF, VTIS…IGQL, MPIS…FGEW, ILGL…ALSA, FSCY…WIYS, LFLP…WAIY, TLPG…ILSA, NAYI…GLFF, and IVSV…TTAL.

This sequence belongs to the GRP transporter (TC 2.A.7.5) family.

Its subcellular location is the cell membrane. This Lactiplantibacillus plantarum (strain ATCC BAA-793 / NCIMB 8826 / WCFS1) (Lactobacillus plantarum) protein is Putative sugar uptake protein lp_2594.